The primary structure comprises 1399 residues: DNA-directed RNA polymerase subunit beta' (1399 aa).

Zn(2+)-binding residues include cysteine 71, cysteine 73, cysteine 86, and cysteine 89. The Mg(2+) site is built by aspartate 462, aspartate 464, and aspartate 466. The Zn(2+) site is built by cysteine 810, cysteine 884, cysteine 891, and cysteine 894.

It belongs to the RNA polymerase beta' chain family. The RNAP catalytic core consists of 2 alpha, 1 beta, 1 beta' and 1 omega subunit. When a sigma factor is associated with the core the holoenzyme is formed, which can initiate transcription. Mg(2+) is required as a cofactor. The cofactor is Zn(2+).

The enzyme catalyses RNA(n) + a ribonucleoside 5'-triphosphate = RNA(n+1) + diphosphate. In terms of biological role, DNA-dependent RNA polymerase catalyzes the transcription of DNA into RNA using the four ribonucleoside triphosphates as substrates. The chain is DNA-directed RNA polymerase subunit beta' from Chelativorans sp. (strain BNC1).